A 253-amino-acid polypeptide reads, in one-letter code: 5-oxoprolinase subunit A (253 aa).

It belongs to the LamB/PxpA family. In terms of assembly, forms a complex composed of PxpA, PxpB and PxpC.

The catalysed reaction is 5-oxo-L-proline + ATP + 2 H2O = L-glutamate + ADP + phosphate + H(+). Catalyzes the cleavage of 5-oxoproline to form L-glutamate coupled to the hydrolysis of ATP to ADP and inorganic phosphate. This is 5-oxoprolinase subunit A from Ruegeria pomeroyi (strain ATCC 700808 / DSM 15171 / DSS-3) (Silicibacter pomeroyi).